A 565-amino-acid polypeptide reads, in one-letter code: Membrane protein insertase YidC (565 aa).

A run of 6 helical transmembrane segments spans residues 6–26 (VLLI…WGKN), 348–368 (LMAL…SLLH), 370–390 (WGWA…PLSA), 437–457 (GGCF…WVLV), 479–499 (PYFI…KLTP), and 516–536 (PLIF…YWVI).

This sequence belongs to the OXA1/ALB3/YidC family. Type 1 subfamily. As to quaternary structure, interacts with the Sec translocase complex via SecD. Specifically interacts with transmembrane segments of nascent integral membrane proteins during membrane integration.

The protein localises to the cell inner membrane. Functionally, required for the insertion and/or proper folding and/or complex formation of integral membrane proteins into the membrane. Involved in integration of membrane proteins that insert both dependently and independently of the Sec translocase complex, as well as at least some lipoproteins. Aids folding of multispanning membrane proteins. The protein is Membrane protein insertase YidC of Xylella fastidiosa (strain M12).